The chain runs to 386 residues: Succinate--CoA ligase [ADP-forming] subunit beta (386 aa).

Positions 9–244 (KAVLRSYGVS…LDEEDSKEIE (236 aa)) constitute an ATP-grasp domain. ATP-binding positions include lysine 46, 53-55 (GRG), glutamate 99, cysteine 102, and glutamate 107. Residues asparagine 199 and aspartate 213 each contribute to the Mg(2+) site. Residues asparagine 264 and 321-323 (GIM) contribute to the substrate site.

This sequence belongs to the succinate/malate CoA ligase beta subunit family. As to quaternary structure, heterotetramer of two alpha and two beta subunits. It depends on Mg(2+) as a cofactor.

It carries out the reaction succinate + ATP + CoA = succinyl-CoA + ADP + phosphate. The enzyme catalyses GTP + succinate + CoA = succinyl-CoA + GDP + phosphate. It participates in carbohydrate metabolism; tricarboxylic acid cycle; succinate from succinyl-CoA (ligase route): step 1/1. Functionally, succinyl-CoA synthetase functions in the citric acid cycle (TCA), coupling the hydrolysis of succinyl-CoA to the synthesis of either ATP or GTP and thus represents the only step of substrate-level phosphorylation in the TCA. The beta subunit provides nucleotide specificity of the enzyme and binds the substrate succinate, while the binding sites for coenzyme A and phosphate are found in the alpha subunit. In Bacillus cereus (strain G9842), this protein is Succinate--CoA ligase [ADP-forming] subunit beta.